The chain runs to 658 residues: Biosynthetic arginine decarboxylase (658 aa).

Lys-127 is modified (N6-(pyridoxal phosphate)lysine). A substrate-binding site is contributed by 307-317 (FDVGGGLGVDY).

It belongs to the Orn/Lys/Arg decarboxylase class-II family. SpeA subfamily. The cofactor is Mg(2+). Requires pyridoxal 5'-phosphate as cofactor.

The enzyme catalyses L-arginine + H(+) = agmatine + CO2. Its pathway is amine and polyamine biosynthesis; agmatine biosynthesis; agmatine from L-arginine: step 1/1. Its function is as follows. Catalyzes the biosynthesis of agmatine from arginine. This Salmonella typhi protein is Biosynthetic arginine decarboxylase.